The primary structure comprises 968 residues: RNA polymerase-associated protein RapA (968 aa).

In terms of domain architecture, Helicase ATP-binding spans Asp164 to Asn334. ATP is bound at residue Asp177–Thr184. The short motif at Asp280–His283 is the DEAH box element. One can recognise a Helicase C-terminal domain in the interval Arg490 to Arg685.

This sequence belongs to the SNF2/RAD54 helicase family. RapA subfamily. As to quaternary structure, interacts with the RNAP. Has a higher affinity for the core RNAP than for the holoenzyme. Its ATPase activity is stimulated by binding to RNAP.

Its function is as follows. Transcription regulator that activates transcription by stimulating RNA polymerase (RNAP) recycling in case of stress conditions such as supercoiled DNA or high salt concentrations. Probably acts by releasing the RNAP, when it is trapped or immobilized on tightly supercoiled DNA. Does not activate transcription on linear DNA. Probably not involved in DNA repair. This chain is RNA polymerase-associated protein RapA, found in Salmonella typhimurium (strain LT2 / SGSC1412 / ATCC 700720).